The following is a 615-amino-acid chain: Mitochondrial distribution and morphology protein 34 (615 aa).

In terms of domain architecture, SMP-LTD spans 1 to 195 (MAFNFNWSPL…LPAIIHRLSL (195 aa)). Disordered regions lie at residues 293–313 (SDKP…RTSS), 346–566 (ATTG…PQPD), and 596–615 (PAFW…YEPR). A compositionally biased stretch (polar residues) spans 301–313 (TPASTPNLHRTSS). Over residues 346–355 (ATTGLSLGSG) the composition is skewed to low complexity. Positions 356-367 (RHSKAGRKKKMR) are enriched in basic residues. 3 stretches are compositionally biased toward polar residues: residues 384-403 (IGST…TRTP), 435-446 (DATTSARASESS), and 457-499 (VTAQ…YSSR). The segment covering 517–557 (QQQQFQQQQQQQQQQQQQQQQQQQQQQQQQQQQQQQQQQQQ) has biased composition (low complexity). Residues 596-606 (PAFWEDSHQHD) are compositionally biased toward basic and acidic residues.

The protein belongs to the MDM34 family. As to quaternary structure, component of the ER-mitochondria encounter structure (ERMES) or MDM complex, composed of mmm-1, mdm10, mdm12 and mdm34.

Its subcellular location is the mitochondrion outer membrane. In terms of biological role, component of the ERMES/MDM complex, which serves as a molecular tether to connect the endoplasmic reticulum (ER) and mitochondria. Components of this complex are involved in the control of mitochondrial shape and protein biogenesis, and function in nonvesicular lipid trafficking between the ER and mitochondria. Mdm34 is required for the interaction of the ER-resident membrane protein mmm-1 and the outer mitochondrial membrane-resident beta-barrel protein mdm10. This is Mitochondrial distribution and morphology protein 34 from Neurospora crassa (strain ATCC 24698 / 74-OR23-1A / CBS 708.71 / DSM 1257 / FGSC 987).